A 65-amino-acid chain; its full sequence is Large ribosomal subunit protein bL35 (65 aa).

It belongs to the bacterial ribosomal protein bL35 family.

The sequence is that of Large ribosomal subunit protein bL35 from Aliarcobacter butzleri (strain RM4018) (Arcobacter butzleri).